A 263-amino-acid polypeptide reads, in one-letter code: Pimeloyl-[acyl-carrier protein] methyl ester esterase (263 aa).

Substrate contacts are provided by residues tryptophan 23, 90–91, and 152–156; these read SL and FLTLQ. Residue serine 90 is the Nucleophile of the active site. Active-site residues include aspartate 216 and histidine 244. Histidine 244 contacts substrate.

The protein belongs to the AB hydrolase superfamily. Carboxylesterase BioH family. Monomer.

It localises to the cytoplasm. It catalyses the reaction 6-carboxyhexanoyl-[ACP] methyl ester + H2O = 6-carboxyhexanoyl-[ACP] + methanol + H(+). It functions in the pathway cofactor biosynthesis; biotin biosynthesis. In terms of biological role, the physiological role of BioH is to remove the methyl group introduced by BioC when the pimeloyl moiety is complete. It allows to synthesize pimeloyl-ACP via the fatty acid synthetic pathway through the hydrolysis of the ester bonds of pimeloyl-ACP esters. This Nitrosospira multiformis (strain ATCC 25196 / NCIMB 11849 / C 71) protein is Pimeloyl-[acyl-carrier protein] methyl ester esterase.